A 268-amino-acid chain; its full sequence is Protein CONTINUOUS VASCULAR RING 1 (268 aa).

Residues 1–70 are Cytoplasmic-facing; sequence MGDEKPVIVM…GWASKKFMTG (70 aa). Residues 21–48 are disordered; the sequence is IPVADSGDKDDGSSSKPSSSSSASSSSH. The segment covering 34 to 48 has biased composition (low complexity); the sequence is SSKPSSSSSASSSSH. Residues 71-91 form a helical membrane-spanning segment; it reads CVILLPIAITFYITWWFIHFV. At 92 to 103 the chain is on the extracellular side; it reads DGFFSPIYAQLG. A helical membrane pass occupies residues 104–124; it reads INVFGFGFLTSIAFIFLVGVF. Topologically, residues 125-268 are cytoplasmic; it reads MSSWLGASVL…LASIDRATSL (144 aa).

This sequence belongs to the plant COV1 protein family. Mostly expressed in flowers and stems, and, to a lower extent, in roots and leaves.

The protein localises to the membrane. In terms of biological role, involved in the regulation of vascular patterning in the stem, probably by negatively regulating the differentiation of vascular tissue. This is Protein CONTINUOUS VASCULAR RING 1 from Arabidopsis thaliana (Mouse-ear cress).